Reading from the N-terminus, the 252-residue chain is Phosphoglycolate phosphatase (252 aa).

Catalysis depends on Asp13, which acts as the Nucleophile. The Mg(2+) site is built by Asp13, Asp15, and Asp192.

This sequence belongs to the HAD-like hydrolase superfamily. CbbY/CbbZ/Gph/YieH family. In terms of assembly, monomer. The cofactor is Mg(2+). Chloride is required as a cofactor.

It catalyses the reaction 2-phosphoglycolate + H2O = glycolate + phosphate. It functions in the pathway organic acid metabolism; glycolate biosynthesis; glycolate from 2-phosphoglycolate: step 1/1. Specifically catalyzes the dephosphorylation of 2-phosphoglycolate. Is involved in the dissimilation of the intracellular 2-phosphoglycolate formed during the DNA repair of 3'-phosphoglycolate ends, a major class of DNA lesions induced by oxidative stress. This Salmonella typhi protein is Phosphoglycolate phosphatase.